The primary structure comprises 234 residues: Large ribosomal subunit protein uL1 (234 aa).

It belongs to the universal ribosomal protein uL1 family. As to quaternary structure, part of the 50S ribosomal subunit.

Its function is as follows. Binds directly to 23S rRNA. The L1 stalk is quite mobile in the ribosome, and is involved in E site tRNA release. Functionally, protein L1 is also a translational repressor protein, it controls the translation of the L11 operon by binding to its mRNA. The protein is Large ribosomal subunit protein uL1 of Klebsiella pneumoniae subsp. pneumoniae (strain ATCC 700721 / MGH 78578).